A 78-amino-acid chain; its full sequence is DNA import protein CedA1 (78 aa).

2 helical membrane-spanning segments follow: residues serine 12 to leucine 32 and alanine 53 to isoleucine 73.

Forms a complex composed of CedA, CedA1 and CedA2.

The protein localises to the cell membrane. Part of the Ced system, which is involved in DNA import. The polypeptide is DNA import protein CedA1 (Sulfolobus acidocaldarius (strain ATCC 33909 / DSM 639 / JCM 8929 / NBRC 15157 / NCIMB 11770)).